Reading from the N-terminus, the 333-residue chain is UDP-3-O-acylglucosamine N-acyltransferase 2 (333 aa).

Residue His243 is the Proton acceptor of the active site.

It belongs to the transferase hexapeptide repeat family. LpxD subfamily. As to quaternary structure, homotrimer.

The enzyme catalyses a UDP-3-O-[(3R)-3-hydroxyacyl]-alpha-D-glucosamine + a (3R)-hydroxyacyl-[ACP] = a UDP-2-N,3-O-bis[(3R)-3-hydroxyacyl]-alpha-D-glucosamine + holo-[ACP] + H(+). It participates in bacterial outer membrane biogenesis; LPS lipid A biosynthesis. Catalyzes the N-acylation of UDP-3-O-acylglucosamine using 3-hydroxyacyl-ACP as the acyl donor. Is involved in the biosynthesis of lipid A, a phosphorylated glycolipid that anchors the lipopolysaccharide to the outer membrane of the cell. The chain is UDP-3-O-acylglucosamine N-acyltransferase 2 from Koribacter versatilis (strain Ellin345).